The primary structure comprises 231 residues: Large ribosomal subunit protein uL1 (231 aa).

The protein belongs to the universal ribosomal protein uL1 family. As to quaternary structure, part of the 50S ribosomal subunit.

Functionally, binds directly to 23S rRNA. The L1 stalk is quite mobile in the ribosome, and is involved in E site tRNA release. In terms of biological role, protein L1 is also a translational repressor protein, it controls the translation of the L11 operon by binding to its mRNA. The polypeptide is Large ribosomal subunit protein uL1 (Methylococcus capsulatus (strain ATCC 33009 / NCIMB 11132 / Bath)).